Consider the following 118-residue polypeptide: Large ribosomal subunit protein bL19 (118 aa).

Belongs to the bacterial ribosomal protein bL19 family.

This protein is located at the 30S-50S ribosomal subunit interface and may play a role in the structure and function of the aminoacyl-tRNA binding site. The chain is Large ribosomal subunit protein bL19 from Citrifermentans bemidjiense (strain ATCC BAA-1014 / DSM 16622 / JCM 12645 / Bem) (Geobacter bemidjiensis).